Consider the following 119-residue polypeptide: Large ribosomal subunit protein uL18 (119 aa).

It belongs to the universal ribosomal protein uL18 family. In terms of assembly, part of the 50S ribosomal subunit; part of the 5S rRNA/L5/L18/L25 subcomplex. Contacts the 5S and 23S rRNAs.

In terms of biological role, this is one of the proteins that bind and probably mediate the attachment of the 5S RNA into the large ribosomal subunit, where it forms part of the central protuberance. This is Large ribosomal subunit protein uL18 from Xanthomonas oryzae pv. oryzae (strain MAFF 311018).